We begin with the raw amino-acid sequence, 385 residues long: MKDVILIANAGSSSLKISIFGIQNKKVKDKIYNIFLEKNNNKILFYINQKQESAISIKDNAIEMMINLFEEWWTKQSALNLIATGHRIVHGGKNFNKPVIVNEKIIKELRVLIPLSPLHQPYNLQVLDLFFQKYKDISHIICFDTSFHYTNPPITKAFGLPKQYYDKGIMRYGFHGLSYQYVSSHFKEITMEDLPTKTIIAHLGSGSSLCAIKNGLSLTSSMGFSVLDGVMMATRTGNLDPGVVLYLINHEKMTMKEITELLYKKSGLLGISGESSDMRTLITNNSHDSKFAVELFVYRIVLEIGKLIAALEGIDCIIFTAGIGQNSAVIREMISGKLSWLGIKIDYGKNQKNEHRISTKGSKVKVFVVPTNEELIIAEEVMKFL.

Residue N9 coordinates Mg(2+). K16 serves as a coordination point for ATP. Substrate is bound at residue R87. D144 functions as the Proton donor/acceptor in the catalytic mechanism. Residues 202-206 (HLGSG) and 277-279 (DMR) contribute to the ATP site. Residue E373 coordinates Mg(2+).

The protein belongs to the acetokinase family. In terms of assembly, homodimer. Requires Mg(2+) as cofactor. The cofactor is Mn(2+).

The protein resides in the cytoplasm. It carries out the reaction acetate + ATP = acetyl phosphate + ADP. The protein operates within metabolic intermediate biosynthesis; acetyl-CoA biosynthesis; acetyl-CoA from acetate: step 1/2. Its function is as follows. Catalyzes the formation of acetyl phosphate from acetate and ATP. Can also catalyze the reverse reaction. This is Acetate kinase from Rickettsia typhi (strain ATCC VR-144 / Wilmington).